A 70-amino-acid polypeptide reads, in one-letter code: Small ribosomal subunit protein bS18c (70 aa).

The protein belongs to the bacterial ribosomal protein bS18 family. In terms of assembly, part of the 30S ribosomal subunit.

The protein localises to the plastid. It localises to the chloroplast. The sequence is that of Small ribosomal subunit protein bS18c from Pyropia yezoensis (Susabi-nori).